A 608-amino-acid chain; its full sequence is Protein transport protein SEC9 (608 aa).

Disordered stretches follow at residues 1–23 (MGFK…SMQD) and 50–307 (VTQK…QTAA). A compositionally biased stretch (basic and acidic residues) spans 9 to 21 (KKDPTESEIRESM). Composition is skewed to low complexity over residues 54 to 67 (SSAA…NPYA) and 74 to 85 (SGGNPYAAAAAG). Residues 100–121 (NGGGGNGGSNSNGGSNSNGGSN) show a composition bias toward gly residues. Over residues 122-134 (GSPYKMNNGGNNA) the composition is skewed to low complexity. Basic and acidic residues predominate over residues 169-183 (SKKEEAPPPLEDPRL). Positions 198-215 (ERDDYEPVYDVGLPEEPE) are enriched in acidic residues. A compositionally biased stretch (basic and acidic residues) spans 241–260 (NVDRELEEDKTALFGPRDDP). One can recognise a t-SNARE coiled-coil homology 1 domain in the interval 390–452 (RFTKQQSAAS…KIAEDKAKEL (63 aa)). The disordered stretch occupies residues 514 to 533 (GEKSKHRKEMMSKYGSRPGR). In terms of domain architecture, t-SNARE coiled-coil homology 2 spans 545-607 (DILEDEIDNN…HLNTARLAGI (63 aa)).

This sequence belongs to the SNAP-25 family.

The chain is Protein transport protein SEC9 (SEC9) from Yarrowia lipolytica (strain CLIB 122 / E 150) (Yeast).